The following is a 262-amino-acid chain: tRNA 4-demethylwyosine(37)-methyltransferase Taw21 (262 aa).

Residues H108, F125, 148 to 149 (DL), and 175 to 176 (DA) each bind S-adenosyl-L-methionine.

The protein belongs to the class I-like SAM-binding methyltransferase superfamily. TRM5/TYW2 family.

The protein resides in the cytoplasm. It catalyses the reaction 4-demethylwyosine(37) in tRNA(Phe) + S-adenosyl-L-methionine = isowyosine(37) in tRNA(Phe) + S-adenosyl-L-homocysteine + H(+). In terms of biological role, catalyzes the C7-methylation of 4-demethylwyosine (imG-14) at position 37 in tRNA(Phe). This Saccharolobus solfataricus (strain ATCC 35092 / DSM 1617 / JCM 11322 / P2) (Sulfolobus solfataricus) protein is tRNA 4-demethylwyosine(37)-methyltransferase Taw21.